We begin with the raw amino-acid sequence, 759 residues long: Inhibitor of nuclear factor kappa-B kinase subunit alpha (759 aa).

Positions 1 to 20 (MERGAERGPPPAPGGVALRG) are disordered. One can recognise a Protein kinase domain in the interval 29 to 316 (WEMRDRLGTG…PETNSPKCFL (288 aa)). ATP-binding positions include 35-43 (LGTGGFGNV) and K58. D158 functions as the Proton acceptor in the catalytic mechanism. Residues 469–490 (LLRYNANLIKMKNNMVSASQQL) are leucine-zipper. Positions 691 to 703 (TPAATWVPQSSSE) are enriched in polar residues. Residues 691 to 715 (TPAATWVPQSSSEYAPHPLSSMATP) are disordered. The interval 753–758 (FDWSWL) is NEMO-binding.

It belongs to the protein kinase superfamily. Ser/Thr protein kinase family. I-kappa-B kinase subfamily.

It is found in the cytoplasm. It localises to the nucleus. The catalysed reaction is L-seryl-[I-kappa-B protein] + ATP = O-phospho-L-seryl-[I-kappa-B protein] + ADP + H(+). Activated when phosphorylated and inactivated when dephosphorylated. Its function is as follows. Phosphorylates inhibitors of NF-kappa-B thus leading to the dissociation of the inhibitor/NF-kappa-B complex and ultimately the degradation of the inhibitor. Phosphorylates 'Ser-10' of histone H3 at NF-kappa-B-regulated promoters during inflammatory responses triggered by cytokines. This is Inhibitor of nuclear factor kappa-B kinase subunit alpha (CHUK) from Gallus gallus (Chicken).